Here is a 277-residue protein sequence, read N- to C-terminus: Ubiquinone biosynthesis protein COQ4, mitochondrial (277 aa).

Residues Met-1 to Arg-14 constitute a mitochondrion transit peptide. His-157, Asp-158, His-161, and Glu-173 together coordinate Zn(2+).

Belongs to the COQ4 family. In terms of assembly, component of a multi-subunit COQ enzyme complex, composed of at least COQ3, COQ4, COQ5, COQ6, COQ7 and COQ9. It depends on Zn(2+) as a cofactor.

Its subcellular location is the mitochondrion inner membrane. The enzyme catalyses a 4-hydroxy-3-methoxy-5-(all-trans-polyprenyl)benzoate + H(+) = a 2-methoxy-6-(all-trans-polyprenyl)phenol + CO2. The protein operates within cofactor biosynthesis; ubiquinone biosynthesis. Its function is as follows. Lyase that catalyzes the C1-decarboxylation of 4-hydroxy-3-methoxy-5-(all-trans-polyprenyl)benzoic acid into 2-methoxy-6-(all-trans-polyprenyl)phenol during ubiquinone biosynthesis. This chain is Ubiquinone biosynthesis protein COQ4, mitochondrial, found in Ajellomyces capsulatus (strain NAm1 / WU24) (Darling's disease fungus).